An 83-amino-acid chain; its full sequence is Large ribosomal subunit protein bL27 (83 aa).

Residues 1-20 (MAHKKGASSSRNGRDSNPQY) form a disordered region. A compositionally biased stretch (polar residues) spans 7–19 (ASSSRNGRDSNPQ).

This sequence belongs to the bacterial ribosomal protein bL27 family.

The chain is Large ribosomal subunit protein bL27 from Bifidobacterium animalis subsp. lactis (strain AD011).